A 669-amino-acid chain; its full sequence is NADH-ubiquinone oxidoreductase chain 5 (669 aa).

The next 15 membrane-spanning stretches (helical) occupy residues 3–23 (LLIV…GRFL), 50–70 (VALC…SELF), 81–100 (LTVI…HIYS), 119–139 (IFTF…LFLG), 178–198 (LALG…STIF), 211–231 (FLFC…VFIG), 253–273 (TPVS…FMIA), 286–306 (LIVI…TGIL), 322–342 (LGYM…FHLM), 377–397 (LLPF…GFPF), 423–443 (FWLG…LLFL), 464–484 (ILMA…GYLA), 522–542 (LIPI…NFVV), 628–648 (AFVM…WDFI), and 649–669 (SFWV…FINI).

Belongs to the complex I subunit 5 family.

The protein resides in the mitochondrion inner membrane. It catalyses the reaction a ubiquinone + NADH + 5 H(+)(in) = a ubiquinol + NAD(+) + 4 H(+)(out). Its function is as follows. Core subunit of the mitochondrial membrane respiratory chain NADH dehydrogenase (Complex I) that is believed to belong to the minimal assembly required for catalysis. Complex I functions in the transfer of electrons from NADH to the respiratory chain. The immediate electron acceptor for the enzyme is believed to be ubiquinone. The sequence is that of NADH-ubiquinone oxidoreductase chain 5 (ND5) from Marchantia polymorpha (Common liverwort).